Here is a 442-residue protein sequence, read N- to C-terminus: Histidine--tRNA ligase (442 aa).

Belongs to the class-II aminoacyl-tRNA synthetase family. As to quaternary structure, homodimer.

It localises to the cytoplasm. The enzyme catalyses tRNA(His) + L-histidine + ATP = L-histidyl-tRNA(His) + AMP + diphosphate + H(+). The chain is Histidine--tRNA ligase from Helicobacter pylori (strain P12).